The primary structure comprises 602 residues: Probable pectinesterase/pectinesterase inhibitor 64 (602 aa).

Residues 36 to 56 traverse the membrane as a helical segment; the sequence is ILIIIAASCILLLLISLLIYA. A disordered region spans residues 62–91; it reads SRNHHNPSHQTPTSDDHPPPETPPSPPPIA. Positions 81 to 90 are enriched in pro residues; sequence PETPPSPPPI. A pectinesterase inhibitor 64 region spans residues 87 to 237; sequence PPPIAQIRLA…VNLTGNALSM (151 aa). N-linked (GlcNAc...) asparagine glycosylation is found at N98, N156, N212, N229, and N315. Residues 288–595 form a pectinesterase 64 region; the sequence is DVTVCKNGGK…YSVANFIQAD (308 aa). Substrate contacts are provided by T367 and Q397. D420 serves as the catalytic Proton donor; for pectinesterase activity. C434 and C454 are oxidised to a cystine. D441 (nucleophile; for pectinesterase activity) is an active-site residue. N492 and N496 each carry an N-linked (GlcNAc...) asparagine glycan. The substrate site is built by R518 and W520.

In the N-terminal section; belongs to the PMEI family. This sequence in the C-terminal section; belongs to the pectinesterase family. As to expression, expressed in siliques.

The protein resides in the membrane. The enzyme catalyses [(1-&gt;4)-alpha-D-galacturonosyl methyl ester](n) + n H2O = [(1-&gt;4)-alpha-D-galacturonosyl](n) + n methanol + n H(+). Its pathway is glycan metabolism; pectin degradation; 2-dehydro-3-deoxy-D-gluconate from pectin: step 1/5. Its function is as follows. Acts in the modification of cell walls via demethylesterification of cell wall pectin. The sequence is that of Probable pectinesterase/pectinesterase inhibitor 64 (PME64) from Arabidopsis thaliana (Mouse-ear cress).